Consider the following 218-residue polypeptide: uncharacterized protein (218 aa).

Residues 1–28 (MLSLQCLPPFFISVPNRSTNSCSTAPLR) constitute a chloroplast transit peptide.

The protein belongs to the SixA phosphatase family.

Its subcellular location is the plastid. The protein resides in the chloroplast. This is an uncharacterized protein from Arabidopsis thaliana (Mouse-ear cress).